The sequence spans 577 residues: Isocitrate dehydrogenase kinase/phosphatase (577 aa).

ATP is bound by residues 318–324 and K339; that span reads APGVRGM. The active site involves D374.

This sequence belongs to the AceK family.

It localises to the cytoplasm. The enzyme catalyses L-seryl-[isocitrate dehydrogenase] + ATP = O-phospho-L-seryl-[isocitrate dehydrogenase] + ADP + H(+). Bifunctional enzyme which can phosphorylate or dephosphorylate isocitrate dehydrogenase (IDH) on a specific serine residue. This is a regulatory mechanism which enables bacteria to bypass the Krebs cycle via the glyoxylate shunt in response to the source of carbon. When bacteria are grown on glucose, IDH is fully active and unphosphorylated, but when grown on acetate or ethanol, the activity of IDH declines drastically concomitant with its phosphorylation. This chain is Isocitrate dehydrogenase kinase/phosphatase, found in Pseudomonas aeruginosa (strain UCBPP-PA14).